The chain runs to 870 residues: Dynamin-2 (870 aa).

The region spanning 28–294 (HLDLPQIAVV…LTNHIRESLP (267 aa)) is the Dynamin-type G domain. A G1 motif region spans residues 38–45 (GGQSAGKS). S41, G43, K44, S45, S46, R59, and G60 together coordinate GDP. The G2 motif stretch occupies residues 64 to 66 (VTR). The segment at 136–139 (DLPG) is G3 motif. The tract at residues 205–208 (TKLD) is G4 motif. Residues K206, D208, and D211 each coordinate GDP. Y231 is subject to Phosphotyrosine; by SRC. Residues 235–238 (VNRS) form a G5 motif region. Positions 236, 237, and 239 each coordinate GDP. K299 bears the N6-acetyllysine mark. Residues 519 to 625 (LVIRRGWLTI…WKASFLRAGV (107 aa)) enclose the PH domain. A Phosphotyrosine; by SRC modification is found at Y597. N6-acetyllysine is present on K598. The GED domain maps to 653–744 (VETIRNLVDS…IIGDISTSTV (92 aa)). Positions 741–870 (TSTVSTPVPP…IRPAEPSLLD (130 aa)) are disordered. The residue at position 755 (T755) is a Phosphothreonine. Residues 756 to 767 (WLQSASSHSPTP) are compositionally biased toward polar residues. S764 carries the phosphoserine; by CDK1 modification. Low complexity predominate over residues 796-806 (VPVGAAASFSA). Positions 826-855 (PAPPQIPSRPVRIPPGIPPGVPSRRPPAAP) are enriched in pro residues. A Phosphoserine; by GSK3-alpha modification is found at S848.

Belongs to the TRAFAC class dynamin-like GTPase superfamily. Dynamin/Fzo/YdjA family. Oligomerizes into a helical polymer that self-assembles around the vesicle membrane, when associated to the menbrane through lipid binding. Interacts with SHANK1 and SHANK2. Interacts with SNX9. Interacts (via C-terminal proline-rich domain (PRD)) with SNX18 (via SH3 domain); this interaction regulates ATG9A and ATG16L1 trafficking from recycling endosomes to sites of autophagosome formation. Interacts with SNX33 (via SH3 domain). Interacts with MYO1E (via SH3 domain). Interacts with PSTPIP1 (via SH3 domain). Interacts with CTNND2. Interacts (via C-terminal proline-rich domain (PRD)) with BIN1 (via SH3 domain); this interaction allows the recruitment of DNM2 to the membrane tubules and inhibits self-assembly-stimulated GTPase activity on the membrane. Interacts with GABARAP, GABARAPL1 and GABARAPL2. Interacts with MAP1LC3B (the lipidate and non-lipidated LC3 form); this interaction mediates recycling endosome scission leading to autophagosome release. Interacts with ITSN1. Interacts (via C-terminal proline-rich domain (PRD)) with SH3BP4 (via SH3 domain); this interaction controls the GTPase activity and is prevented by EGFR-induced tyrosine phosphorylation of either DNM2 or SH3BP4. May interact with PIK3C3. May be a component of a complex composed of RAB5A (in GDP-bound form), DYN2 and PIK3C3. Interacts with SDC4; this interaction is markedly enhanced at focal ahesion site upon induction of focal adhesions and stress-fiber formation. Interacts with ACTN1. Interacts with CTTN; this interaction stimulates the intrinsic GTPase activity of DNM2 and stabilizes the association of DNM2 and actin filaments; in addition this interaction is stimulated by ligand binding to the receptor, leading to the recruitment of the DNM2-CTTN complex to the sequestered receptor-ligand complex to its internalization. Interacts with NOSTRIN (via SH3 domain); this interaction allows the recruitment of NOS3 to dynamin-positive structures. Interacts with TUBG1; this interaction may participate in centrosome cohesion. In terms of processing, phosphorylation at Ser-848 by GSK3-alpha relieves the inhibition of BIN1 and promotes endocytosis. Phosphorylation at Ser-764 by CDK1 is greatly increased upon mitotic entry. It regulates cytokinesis downstream of calcineurin, and does not affect clathrin-mediated endocytosis. Dephosphorylated by calcineurin/PP2 during cytokinesis in a Ca(2+)- and calmodulin-dependent manner. Phosphorylated on tyrosine residues by EGFR and after activation of SRC. In terms of tissue distribution, widely expressed. Expressed in skeletal muscle and the peripheral nerve.

Its subcellular location is the cytoplasm. The protein resides in the cytoskeleton. It is found in the cytoplasmic vesicle. It localises to the clathrin-coated vesicle. The protein localises to the cell projection. Its subcellular location is the uropodium. The protein resides in the endosome. It is found in the microtubule organizing center. It localises to the centrosome. The protein localises to the centriole. Its subcellular location is the recycling endosome. The protein resides in the phagocytic cup. It is found in the phagosome membrane. It localises to the podosome. The protein localises to the cell junction. Its subcellular location is the postsynaptic density. The protein resides in the synapse. It is found in the synaptosome. It localises to the midbody. The protein localises to the membrane. Its subcellular location is the clathrin-coated pit. It carries out the reaction GTP + H2O = GDP + phosphate + H(+). Its function is as follows. Catalyzes the hydrolysis of GTP and utilizes this energy to mediate vesicle scission at plasma membrane during endocytosis and filament remodeling at many actin structures during organization of the actin cytoskeleton. Plays an important role in vesicular trafficking processes, namely clathrin-mediated endocytosis (CME), exocytic and clathrin-coated vesicle from the trans-Golgi network, and PDGF stimulated macropinocytosis. During vesicular trafficking process, associates to the membrane, through lipid binding, and self-assembles into ring-like structure through oligomerization to form a helical polymer around the vesicle membrane and leading to vesicle scission. Plays a role in organization of the actin cytoskeleton by mediating arrangement of stress fibers and actin bundles in podocytes. During organization of the actin cytoskeleton, self-assembles into ring-like structure that directly bundles actin filaments to form typical membrane tubules decorated with dynamin spiral polymers. Self-assembly increases GTPase activity and the GTP hydrolysis causes the rapid depolymerization of dynamin spiral polymers, and results in dispersion of actin bundles. Remodels, through its interaction with CTTN, bundled actin filaments in a GTPase-dependent manner and plays a role in orchestrating the global actomyosin cytoskeleton. The interaction with CTTN stabilizes the interaction of DNM2 and actin filaments and stimulates the intrinsic GTPase activity that results in actin filament-barbed ends and increases the sensitivity of filaments in bundles to the actin depolymerizing factor, CFL1. Plays a role in the autophagy process, by participating in the formation of ATG9A vesicles destined for the autophagosomes through its interaction with SNX18, by mediating recycling endosome scission leading to autophagosome release through MAP1LC3B interaction. Also regulates maturation of apoptotic cell corpse-containing phagosomes by recruiting PIK3C3 to the phagosome membrane. Also plays a role in cytokinesis. May participate in centrosome cohesion through its interaction with TUBG1. Plays a role in the regulation of neuron morphology, axon growth and formation of neuronal growth cones. Involved in membrane tubulation. The polypeptide is Dynamin-2 (Homo sapiens (Human)).